Consider the following 459-residue polypeptide: Chromosomal replication initiator protein DnaA (459 aa).

A domain I, interacts with DnaA modulators region spans residues 1–83; sequence MKNAREIWRN…NKLEIHFIEE (83 aa). The interval 83–121 is domain II; the sequence is ESQAHKYAPADGSSNESIAVTETKEQPVLLPSKEEGDLG. The domain III, AAA+ region stretch occupies residues 122-338; it reads QLNDKYIFET…GALTRVVAYA (217 aa). Gly166, Gly168, Lys169, and Thr170 together coordinate ATP. Residues 339–459 are domain IV, binds dsDNA; the sequence is KLVGRPIDPD…IQTLKKALSN (121 aa).

This sequence belongs to the DnaA family. As to quaternary structure, oligomerizes as a right-handed, spiral filament on DNA at oriC.

It localises to the cytoplasm. Functionally, plays an essential role in the initiation and regulation of chromosomal replication. ATP-DnaA binds to the origin of replication (oriC) to initiate formation of the DNA replication initiation complex once per cell cycle. Binds the DnaA box (a 9 base pair repeat at the origin) and separates the double-stranded (ds)DNA. Forms a right-handed helical filament on oriC DNA; dsDNA binds to the exterior of the filament while single-stranded (ss)DNA is stabiized in the filament's interior. The ATP-DnaA-oriC complex binds and stabilizes one strand of the AT-rich DNA unwinding element (DUE), permitting loading of DNA polymerase. After initiation quickly degrades to an ADP-DnaA complex that is not apt for DNA replication. Binds acidic phospholipids. The protein is Chromosomal replication initiator protein DnaA of Exiguobacterium sp. (strain ATCC BAA-1283 / AT1b).